The chain runs to 601 residues: Elongation factor 4 (601 aa).

The region spanning 6–188 (NRIRNFCIIA…QVVTKIAPPK (183 aa)) is the tr-type G domain. GTP is bound by residues 18 to 23 (DHGKST) and 135 to 138 (NKID).

Belongs to the TRAFAC class translation factor GTPase superfamily. Classic translation factor GTPase family. LepA subfamily.

The protein resides in the cell membrane. It catalyses the reaction GTP + H2O = GDP + phosphate + H(+). Required for accurate and efficient protein synthesis under certain stress conditions. May act as a fidelity factor of the translation reaction, by catalyzing a one-codon backward translocation of tRNAs on improperly translocated ribosomes. Back-translocation proceeds from a post-translocation (POST) complex to a pre-translocation (PRE) complex, thus giving elongation factor G a second chance to translocate the tRNAs correctly. Binds to ribosomes in a GTP-dependent manner. This Desulforamulus reducens (strain ATCC BAA-1160 / DSM 100696 / MI-1) (Desulfotomaculum reducens) protein is Elongation factor 4.